We begin with the raw amino-acid sequence, 91 residues long: Non-specific lipid-transfer protein 1 (91 aa).

4 cysteine pairs are disulfide-bonded: C3–C50, C13–C27, C28–C73, and C48–C87.

This sequence belongs to the plant LTP family.

Functionally, plant non-specific lipid-transfer proteins transfer phospholipids as well as galactolipids across membranes. May play a role in wax or cutin deposition in the cell walls of expanding epidermal cells and certain secretory tissues. This is Non-specific lipid-transfer protein 1 from Morus nigra (Black mulberry).